The primary structure comprises 136 residues: ATP synthase F(0) complex subunit C1, mitochondrial (136 aa).

A mitochondrion-targeting transit peptide spans 1-61 (MQTAGALFIS…REFQTSVVSR (61 aa)). Residues 77-97 (VGVAGSGAGIGTVFGSLIIGY) traverse the membrane as a helical segment. At Lys104 the chain carries N6,N6,N6-trimethyllysine. A helical transmembrane segment spans residues 112 to 132 (ILGFALSEAMGLFCLMVAFLI).

This sequence belongs to the ATPase C chain family. In terms of assembly, homooctamer; the c-ring consists of eight c subunits forming a circle, and each subunit adopts a hairpin shape. Component of the ATP synthase complex composed at least of ATP5F1A/subunit alpha, ATP5F1B/subunit beta, ATP5MC1/subunit c (homooctomer), MT-ATP6/subunit a, MT-ATP8/subunit 8, ATP5ME/subunit e, ATP5MF/subunit f, ATP5MG/subunit g, ATP5MK/subunit k, ATP5MJ/subunit j, ATP5F1C/subunit gamma, ATP5F1D/subunit delta, ATP5F1E/subunit epsilon, ATP5PF/subunit F6, ATP5PB/subunit b, ATP5PD/subunit d, ATP5PO/subunit OSCP. ATP synthase complex consists of a soluble F(1) head domain (subunits alpha(3) and beta(3)) - the catalytic core - and a membrane F(0) domain - the membrane proton channel (subunits c, a, 8, e, f, g, k and j). These two domains are linked by a central stalk (subunits gamma, delta, and epsilon) rotating inside the F1 region and a stationary peripheral stalk (subunits F6, b, d, and OSCP). Interacts with TMEM70 (homooligomer form); this interaction facilitates the oligomer formation of subunit c/ATP5MC1 (c-ring) and the c-ring membrane insertion and also protects ATP5MC1 against intramitochondrial proteolysis. In terms of processing, trimethylated by ATPSCKMT at Lys-104. Methylation is required for proper incorporation of the C subunit into the ATP synthase complex and mitochondrial respiration.

Its subcellular location is the mitochondrion membrane. It catalyses the reaction H(+)(in) = H(+)(out). Subunit c, of the mitochondrial membrane ATP synthase complex (F(1)F(0) ATP synthase or Complex V) that produces ATP from ADP in the presence of a proton gradient across the membrane which is generated by electron transport complexes of the respiratory chain. ATP synthase complex consist of a soluble F(1) head domain - the catalytic core - and a membrane F(1) domain - the membrane proton channel. These two domains are linked by a central stalk rotating inside the F(1) region and a stationary peripheral stalk. During catalysis, ATP synthesis in the catalytic domain of F(1) is coupled via a rotary mechanism of the central stalk subunits to proton translocation. With the subunit a (MT-ATP6), forms the proton-conducting channel in the F(0) domain, that contains two crucial half-channels (inlet and outlet) that facilitate proton movement from the mitochondrial intermembrane space (IMS) into the matrix. Protons are taken up via the inlet half-channel and released through the outlet half-channel, following a Grotthuss mechanism. The sequence is that of ATP synthase F(0) complex subunit C1, mitochondrial from Homo sapiens (Human).